Here is a 493-residue protein sequence, read N- to C-terminus: MTELNKLSVADSLKGLKNKEFTSKELVNAHIKQIEKHKNLNAYVTETFDLALKQAEEADQSYAKNHSRTLEGIPFAAKDLFCTKGIRTTACSNILREFIPNYESGVTQNIFNKGGVMLGKTNMDEFAMGSANITSCFGNVISPWKALDDGADLVPGGSSGGSAAAVSGFMATAALGSDTGGSVRQPASFTGLVGFKPTYGRCSRYGMVSFASSLDQAGIFTRSVLDSSIMLEAMIGFDERDSTSIKMEVPQLQPAIGSSIKGMKIGVPLSLGEGGIIEPDIMKMWHSTIELLKDAGAEIIDISLPHTKYGVAVYYVIAPAEASSNLSRYDGVRYGLRVEKENMSLDEMYEITRSSGFGDEVKRRIMIGTYVLSSSFMDAYYLKAQKVRRLVADDFNNAFAKVDAILLPSAPTEAFRIGEKQNDPTITYLNDLFTIPASLAGLPCVSVPAGLSNRGLPLGMQVIGKQLDEYNVLRVASAIEAGVKHIKFEPVGF.

Catalysis depends on charge relay system residues Lys78 and Ser158. Ser182 (acyl-ester intermediate) is an active-site residue.

Belongs to the amidase family. GatA subfamily. In terms of assembly, heterotrimer of A, B and C subunits.

The catalysed reaction is L-glutamyl-tRNA(Gln) + L-glutamine + ATP + H2O = L-glutaminyl-tRNA(Gln) + L-glutamate + ADP + phosphate + H(+). Allows the formation of correctly charged Gln-tRNA(Gln) through the transamidation of misacylated Glu-tRNA(Gln) in organisms which lack glutaminyl-tRNA synthetase. The reaction takes place in the presence of glutamine and ATP through an activated gamma-phospho-Glu-tRNA(Gln). The sequence is that of Glutamyl-tRNA(Gln) amidotransferase subunit A from Rickettsia bellii (strain RML369-C).